A 72-amino-acid chain; its full sequence is NAD(P)H-quinone oxidoreductase subunit O (72 aa).

This sequence belongs to the complex I NdhO subunit family. As to quaternary structure, NDH-1 can be composed of about 15 different subunits; different subcomplexes with different compositions have been identified which probably have different functions.

The protein resides in the cellular thylakoid membrane. The catalysed reaction is a plastoquinone + NADH + (n+1) H(+)(in) = a plastoquinol + NAD(+) + n H(+)(out). It carries out the reaction a plastoquinone + NADPH + (n+1) H(+)(in) = a plastoquinol + NADP(+) + n H(+)(out). In terms of biological role, NDH-1 shuttles electrons from an unknown electron donor, via FMN and iron-sulfur (Fe-S) centers, to quinones in the respiratory and/or the photosynthetic chain. The immediate electron acceptor for the enzyme in this species is believed to be plastoquinone. Couples the redox reaction to proton translocation, and thus conserves the redox energy in a proton gradient. Cyanobacterial NDH-1 also plays a role in inorganic carbon-concentration. The polypeptide is NAD(P)H-quinone oxidoreductase subunit O (Gloeothece citriformis (strain PCC 7424) (Cyanothece sp. (strain PCC 7424))).